The sequence spans 486 residues: NADH dehydrogenase [ubiquinone] flavoprotein 1, mitochondrial (486 aa).

The transit peptide at M1–F30 directs the protein to the mitochondrion. Residues S31–T40 are compositionally biased toward low complexity. Residues S31–G57 form a disordered region. The span at P41 to P50 shows a compositional bias: pro residues. G110–G119 is a binding site for NADH. F222 to T270 provides a ligand contact to FMN. [4Fe-4S] cluster-binding residues include C402, C405, C408, and C448.

It belongs to the complex I 51 kDa subunit family. Complex I is composed of at least 49 different subunits. This is a component of the flavoprotein-sulfur (FP) fragment of the enzyme. The cofactor is FMN. [4Fe-4S] cluster serves as cofactor.

It is found in the mitochondrion inner membrane. The catalysed reaction is a ubiquinone + NADH + 5 H(+)(in) = a ubiquinol + NAD(+) + 4 H(+)(out). In terms of biological role, core subunit of the mitochondrial membrane respiratory chain NADH dehydrogenase (Complex I) that is believed to belong to the minimal assembly required for catalysis. Complex I functions in the transfer of electrons from NADH to the respiratory chain. The immediate electron acceptor for the enzyme is believed to be ubiquinone. In Arabidopsis thaliana (Mouse-ear cress), this protein is NADH dehydrogenase [ubiquinone] flavoprotein 1, mitochondrial.